Consider the following 225-residue polypeptide: 2-C-methyl-D-erythritol 4-phosphate cytidylyltransferase (225 aa).

This sequence belongs to the IspD/TarI cytidylyltransferase family. IspD subfamily.

It carries out the reaction 2-C-methyl-D-erythritol 4-phosphate + CTP + H(+) = 4-CDP-2-C-methyl-D-erythritol + diphosphate. It functions in the pathway isoprenoid biosynthesis; isopentenyl diphosphate biosynthesis via DXP pathway; isopentenyl diphosphate from 1-deoxy-D-xylulose 5-phosphate: step 2/6. In terms of biological role, catalyzes the formation of 4-diphosphocytidyl-2-C-methyl-D-erythritol from CTP and 2-C-methyl-D-erythritol 4-phosphate (MEP). The protein is 2-C-methyl-D-erythritol 4-phosphate cytidylyltransferase of Cereibacter sphaeroides (strain KD131 / KCTC 12085) (Rhodobacter sphaeroides).